The following is a 72-amino-acid chain: DNA-directed RNA polymerase subunit epsilon (72 aa).

Belongs to the RNA polymerase subunit epsilon family. In terms of assembly, RNAP is composed of a core of 2 alpha, a beta and a beta' subunit. The core is associated with a delta subunit, and at least one of epsilon or omega. When a sigma factor is associated with the core the holoenzyme is formed, which can initiate transcription.

It catalyses the reaction RNA(n) + a ribonucleoside 5'-triphosphate = RNA(n+1) + diphosphate. Functionally, a non-essential component of RNA polymerase (RNAP). This Staphylococcus haemolyticus (strain JCSC1435) protein is DNA-directed RNA polymerase subunit epsilon.